The sequence spans 156 residues: ATP synthase subunit b (156 aa).

Residues 7-27 (LFAQMIVFFVLWWVVARFVWP) form a helical membrane-spanning segment.

Belongs to the ATPase B chain family. In terms of assembly, F-type ATPases have 2 components, F(1) - the catalytic core - and F(0) - the membrane proton channel. F(1) has five subunits: alpha(3), beta(3), gamma(1), delta(1), epsilon(1). F(0) has three main subunits: a(1), b(2) and c(10-14). The alpha and beta chains form an alternating ring which encloses part of the gamma chain. F(1) is attached to F(0) by a central stalk formed by the gamma and epsilon chains, while a peripheral stalk is formed by the delta and b chains.

The protein resides in the cell membrane. F(1)F(0) ATP synthase produces ATP from ADP in the presence of a proton or sodium gradient. F-type ATPases consist of two structural domains, F(1) containing the extramembraneous catalytic core and F(0) containing the membrane proton channel, linked together by a central stalk and a peripheral stalk. During catalysis, ATP synthesis in the catalytic domain of F(1) is coupled via a rotary mechanism of the central stalk subunits to proton translocation. Its function is as follows. Component of the F(0) channel, it forms part of the peripheral stalk, linking F(1) to F(0). The sequence is that of ATP synthase subunit b from Polynucleobacter asymbioticus (strain DSM 18221 / CIP 109841 / QLW-P1DMWA-1) (Polynucleobacter necessarius subsp. asymbioticus).